Here is a 185-residue protein sequence, read N- to C-terminus: Ribosome-recycling factor (185 aa).

Belongs to the RRF family.

It localises to the cytoplasm. Responsible for the release of ribosomes from messenger RNA at the termination of protein biosynthesis. May increase the efficiency of translation by recycling ribosomes from one round of translation to another. This Dehalococcoides mccartyi (strain ATCC BAA-2266 / KCTC 15142 / 195) (Dehalococcoides ethenogenes (strain 195)) protein is Ribosome-recycling factor.